Reading from the N-terminus, the 355-residue chain is Protein-glutamate methylesterase/protein-glutamine glutaminase (355 aa).

The region spanning 7–123 (AAVVVDDSQF…SVGIKQQQDE (117 aa)) is the Response regulatory domain. At Asp57 the chain carries 4-aspartylphosphate. The segment at 139–159 (TEAAAERTTSTATSTTTSRSA) is disordered. In terms of domain architecture, CheB-type methylesterase spans 161 to 355 (EYVDKPTLVI…DGVLDTIMRE (195 aa)). Active-site residues include Ser173, His200, and Asp297.

This sequence belongs to the CheB family. Phosphorylated by CheA. Phosphorylation of the N-terminal regulatory domain activates the methylesterase activity.

It is found in the cytoplasm. It catalyses the reaction [protein]-L-glutamate 5-O-methyl ester + H2O = L-glutamyl-[protein] + methanol + H(+). The enzyme catalyses L-glutaminyl-[protein] + H2O = L-glutamyl-[protein] + NH4(+). Its function is as follows. Involved in chemotaxis. Part of a chemotaxis signal transduction system that modulates chemotaxis in response to various stimuli. Catalyzes the demethylation of specific methylglutamate residues introduced into the chemoreceptors (methyl-accepting chemotaxis proteins or MCP) by CheR. Also mediates the irreversible deamidation of specific glutamine residues to glutamic acid. This Natronomonas pharaonis (strain ATCC 35678 / DSM 2160 / CIP 103997 / JCM 8858 / NBRC 14720 / NCIMB 2260 / Gabara) (Halobacterium pharaonis) protein is Protein-glutamate methylesterase/protein-glutamine glutaminase.